Here is a 707-residue protein sequence, read N- to C-terminus: Vicilin-like seed storage protein At2g18540 (707 aa).

The signal sequence occupies residues 1 to 24 (MSRFRILPLSIFLCFVSLFFCTES). Positions 42-185 (PLLVKKDQRT…AFAVPEDILR (144 aa)) constitute a Cupin type-1 1 domain. Residues Asn-60, Asn-203, Asn-285, Asn-356, Asn-396, and Asn-399 are each glycosylated (N-linked (GlcNAc...) asparagine). The Cupin type-1 2 domain maps to 247 to 403 (FNVFEEDPDF…SFNLSNETIK (157 aa)). Residues 439–696 (EEEEIERRRK…KKEEEEEKRR (258 aa)) are compositionally biased toward basic and acidic residues. The disordered stretch occupies residues 439–707 (EEEEIERRRK…PPQPKPPEEI (269 aa)). A compositionally biased stretch (pro residues) spans 698–707 (PPQPKPPEEI).

The protein belongs to the 7S seed storage protein family.

Its function is as follows. Seed storage protein. The polypeptide is Vicilin-like seed storage protein At2g18540 (Arabidopsis thaliana (Mouse-ear cress)).